A 721-amino-acid chain; its full sequence is BBSome complex member BBS2 (721 aa).

Positions 325 to 369 (KGNLLDTSVEQGLIRELSQKKQNLLLELRNYEENTKAELSSPLNE) form a coiled coil.

As to quaternary structure, part of BBSome complex, that contains BBS1, BBS2, BBS4, BBS5, BBS7, BBS8/TTC8, BBS9 and BBIP10. Interacts (via C-terminus) with BBS7. Interacts (via coiled coil domain) with MKKS. Interacts with CCDC28B. Interacts with DLEC1.

It is found in the cell projection. The protein resides in the cilium membrane. The protein localises to the cytoplasm. Its subcellular location is the cytoskeleton. It localises to the microtubule organizing center. It is found in the centrosome. The protein resides in the centriolar satellite. In terms of biological role, the BBSome complex is thought to function as a coat complex required for sorting of specific membrane proteins to the primary cilia. The BBSome complex is required for ciliogenesis but is dispensable for centriolar satellite function. This ciliogenic function is mediated in part by the Rab8 GDP/GTP exchange factor, which localizes to the basal body and contacts the BBSome. Rab8(GTP) enters the primary cilium and promotes extension of the ciliary membrane. Firstly the BBSome associates with the ciliary membrane and binds to RAB3IP/Rabin8, the guanosyl exchange factor (GEF) for Rab8 and then the Rab8-GTP localizes to the cilium and promotes docking and fusion of carrier vesicles to the base of the ciliary membrane. The BBSome complex, together with the LTZL1, controls SMO ciliary trafficking and contributes to the sonic hedgehog (SHH) pathway regulation. Required for proper BBSome complex assembly and its ciliary localization. The polypeptide is BBSome complex member BBS2 (Bbs2) (Rattus norvegicus (Rat)).